We begin with the raw amino-acid sequence, 599 residues long: Genetic interactor of prohibitins 3, mitochondrial (599 aa).

The N-terminal 46 residues, 1–46 (MLSLRRSIWIAACKRVSSFRTTIPIKSLHTNSQPVLSLRNVKFRPY), are a transit peptide targeting the mitochondrion. Positions 158–368 (IESLDAIMTS…MHDVPGFGEN (211 aa)) constitute a CP-type G domain. The segment at 312-342 (NSGASTPSDIRALRRKNEQEKNRTGPGASYM) is disordered. Residues 322–334 (RALRRKNEQEKNR) are compositionally biased toward basic and acidic residues.

This sequence belongs to the TRAFAC class YlqF/YawG GTPase family. GEP3 subfamily.

The protein localises to the mitochondrion. Functionally, may be involved in the mitochondrial lipid metabolism. The polypeptide is Genetic interactor of prohibitins 3, mitochondrial (GEP3) (Meyerozyma guilliermondii (strain ATCC 6260 / CBS 566 / DSM 6381 / JCM 1539 / NBRC 10279 / NRRL Y-324) (Yeast)).